A 312-amino-acid chain; its full sequence is Ribosomal RNA small subunit methyltransferase H (312 aa).

S-adenosyl-L-methionine is bound by residues Ala-33 to His-35, Asp-52, Phe-79, Asp-100, and Gln-107.

This sequence belongs to the methyltransferase superfamily. RsmH family.

It localises to the cytoplasm. It catalyses the reaction cytidine(1402) in 16S rRNA + S-adenosyl-L-methionine = N(4)-methylcytidine(1402) in 16S rRNA + S-adenosyl-L-homocysteine + H(+). Functionally, specifically methylates the N4 position of cytidine in position 1402 (C1402) of 16S rRNA. This Finegoldia magna (strain ATCC 29328 / DSM 20472 / WAL 2508) (Peptostreptococcus magnus) protein is Ribosomal RNA small subunit methyltransferase H.